Consider the following 486-residue polypeptide: MKIPASSPQDTTNNNNNTNSTDSNHLSMDEHVMRSMDWDSIMKELELDDDSAPNSLKTGFTTTTTDSTILPLYAVDSNLPGFPDQIQPSDFESSSDVYPGQNQTTGYGFNSLDSVDNGGFDFIEDLIRVVDCVESDELQLAQVVLSRLNQRLRSPAGRPLQRAAFYFKEALGSFLTGSNRNPIRLSSWSEIVQRIRAIKEYSGISPIPLFSHFTANQAILDSLSSQSSSPFVHVVDFEIGFGGQYASLMREITEKSVSGGFLRVTAVVAEECAVETRLVKENLTQFAAEMKIRFQIEFVLMKTFEMLSFKAIRFVEGERTVVLISPAIFRRLSGITDFVNNLRRVSPKVVVFVDSEGWTEIAGSGSFRREFVSALEFYTMVLESLDAAAPPGDLVKKIVEAFVLRPKISAAVETAADRRHTGEMTWREAFCAAGMRPIQLSQFADFQAECLLEKAQVRGFHVAKRQGELVLCWHGRALVATSAWRF.

The disordered stretch occupies residues 1 to 28; that stretch reads MKIPASSPQDTTNNNNNTNSTDSNHLSM. A compositionally biased stretch (low complexity) spans 10–24; it reads DTTNNNNNTNSTDSN. The GRAS domain occupies 113–485; that stretch reads DSVDNGGFDF…RALVATSAWR (373 aa). The segment at 120 to 179 is leucine repeat I (LRI); it reads FDFIEDLIRVVDCVESDELQLAQVVLSRLNQRLRSPAGRPLQRAAFYFKEALGSFLTGSN. The VHIID stretch occupies residues 198 to 266; sequence IKEYSGISPI…VSGGFLRVTA (69 aa). Residues 232-236 carry the VHIID motif; sequence VHVVD. A leucine repeat II (LRII) region spans residues 278–310; the sequence is LVKENLTQFAAEMKIRFQIEFVLMKTFEMLSFK. The tract at residues 320–410 is PFYRE; sequence TVVLISPAIF…AFVLRPKISA (91 aa). Residues 413–485 are SAW; sequence ETAADRRHTG…RALVATSAWR (73 aa).

It belongs to the GRAS family. Expressed in seedlings, roots, leaves and flowers.

It localises to the nucleus. Its function is as follows. Probable transcription factor involved in plant development. The protein is Scarecrow-like protein 15 (SCL15) of Arabidopsis thaliana (Mouse-ear cress).